Consider the following 562-residue polypeptide: MKAQLRALIGQGIEALRANGTLPADTLPPDFVVERPKTREHGDFATNAAMLLAKAARSNPRALAQALLAALPASDDVARVEIAGPGFINFHLTPAAYQREVIHVIKQGHDYGRGLAGNGRSVGVEYVSANPTGPLHVGHGRAAAIGDSLARVLDANGWNVKREFYYNDAGVQIENLALSVQARAQGLTPDSAGWPENGYRGDYIADVAKAYLAGDTVDLEGHLVTGTKDPADLESIRRFAVAYLRNEQNHDLAAFRVDFDIYFLESSLYKDGKVDEAVQKLIASGHTYEEGGALWLKSTDFGDDKDRVMRKSDGTYTYFVPDVAYHLTKWQRGYERAITELGADHHGSLTRVRAGLQAMELGIPQGWPEYVLHQMVTVMRGGEEVKLSKRAGSYVTLRDLIEETSADAVRWFLIARKPDSQLTFDIDLARAQSNDNPVFYVQYAHARVCSVLRQAQEKGLKYDQTHGMAELARLDDEHSLALMLELSRYAEVVELAGQTLEPYQIAQYLRELAHAFHTWYHNSKVLVDDAAERDAKLTLAVATQQVLANGLELLGVSAPEKM.

The 'HIGH' region motif lies at 129 to 139 (ANPTGPLHVGH).

This sequence belongs to the class-I aminoacyl-tRNA synthetase family. Monomer.

Its subcellular location is the cytoplasm. The enzyme catalyses tRNA(Arg) + L-arginine + ATP = L-arginyl-tRNA(Arg) + AMP + diphosphate. The polypeptide is Arginine--tRNA ligase (Xanthomonas campestris pv. campestris (strain B100)).